The primary structure comprises 436 residues: Enolase (436 aa).

Gln-167 contributes to the (2R)-2-phosphoglycerate binding site. Glu-209 serves as the catalytic Proton donor. 3 residues coordinate Mg(2+): Asp-246, Glu-291, and Asp-318. (2R)-2-phosphoglycerate is bound by residues Lys-343, Arg-372, Ser-373, and Lys-394. Lys-343 (proton acceptor) is an active-site residue.

This sequence belongs to the enolase family. Component of the RNA degradosome, a multiprotein complex involved in RNA processing and mRNA degradation. Requires Mg(2+) as cofactor.

The protein localises to the cytoplasm. Its subcellular location is the secreted. It is found in the cell surface. It catalyses the reaction (2R)-2-phosphoglycerate = phosphoenolpyruvate + H2O. It functions in the pathway carbohydrate degradation; glycolysis; pyruvate from D-glyceraldehyde 3-phosphate: step 4/5. Its function is as follows. Catalyzes the reversible conversion of 2-phosphoglycerate (2-PG) into phosphoenolpyruvate (PEP). It is essential for the degradation of carbohydrates via glycolysis. The chain is Enolase from Actinobacillus pleuropneumoniae serotype 5b (strain L20).